The primary structure comprises 344 residues: Meiotic recombination protein DMC1 homolog A (344 aa).

133 to 140 serves as a coordination point for ATP; that stretch reads GEFRSGKT. Arginine 235 serves as a coordination point for dsDNA. The ssDNA site is built by arginine 235, phenylalanine 238, arginine 241, arginine 247, and arginine 315. The dsDNA site is built by arginine 241 and arginine 247.

The protein belongs to the RecA family. DMC1 subfamily. As to expression, expressed in pollen mother cells and root tips.

It localises to the nucleus. Functionally, recombinase that may participate in meiotic recombination, specifically in homologous strand assimilation, which is required for the resolution of meiotic double-strand breaks. Exhibits DNA-dependent ATPase activity when bound to single-stranded DNA (ssDNA). Mediates renaturation of homologous complementary strands as well as assimilation of single strands into homologous supercoiled duplexes leading to D-loop formation. Binds circular single-stranded DNA (ssDNA) and circular double-stranded DNA (dsDNA) in vitro. Catalyzes DNA homologous renaturation and DNA strand exchange. The rates of these activities are dependent on the state of ATP hydrolysis. Forms helical filaments along ssDNA and dsDNA, and promotes strand exchange between ssDNA and dsDNA with long DNA substrates of several thousand base pairs. The presence of the replication protein A is not required for this activity. Seems to be required for homologous pairing and subsequent chromosome segregation during male meiosis. May be not directly required for homologous pairing during male meiosis. Required for synaptonemal complex assembly and crossover formation. Functions redundantly with DMC1B. The polypeptide is Meiotic recombination protein DMC1 homolog A (Oryza sativa subsp. indica (Rice)).